Here is a 1053-residue protein sequence, read N- to C-terminus: Serine/threonine-protein phosphatase 6 regulatory ankyrin repeat subunit A (1053 aa).

ANK repeat units follow at residues 40-69 (EKRTPLHAAAYLGDAEIIELLILSGARVNA), 73-102 (KWLTPLHRAVASCSEEAVQILLKHSADVNA), 106-135 (NWQTPLHIAAANKAVKCAESLVPLLSNVNV), 139-168 (AGRTALHHAAFSGHGEMVKLLLSRGANINA), 172-201 (KDRRAIHWAAYMGHIEVVKLLVSHGAEVTC), 205-234 (KSYTPLHAAASSGMISVVKYLLDLGVDMNE), 238-267 (YGNTPLHVACYNGQDVVVNELIDCGANVNQ), 271-301 (KGFTPLHFAAASTHGALCLELLVGNGADVNM), 305-334 (DGKTPLHMTALHGRFSRSQTIIQSGAVIDC), 338-367 (NGNTPLHIAARYGHELLINTLITSGADTAK), 371-400 (HGMFPLHLAALSGFSDCCRKLLSSGFDIDT), 404-433 (FGRTCLHAAAAGGNLECLNLLLNTGADFNK), 437-466 (FGRSPLHYAAANCNYQCLFALVGSGASVND), 470-500 (RGCTPLHYAATSDTDGKCLEYLLRNDANPGI), 504-534 (QGYNAVHYSAAYGHRLCLQLIASETPLDVLM), 549-578 (ATISPLHLAAYHGHHQALEVLVQSLLDLDV), 582-611 (SGRTPLDLAAFKGHVECVDVLINQGASILV), 616-645 (LKRTPIHAAATNGHSECLRLLIGNAEPQNA), 652-681 (NGQTPLMLSVLNGHTDCVYSLLNKGANVDA), 685-714 (WGRTALHRGAVTGHEECVDALLQHGAKCLL), 718-747 (RGRTPIHLSAACGHIGVLGALLQSATSVDA), 755-786 (HGYTALHWACYNGHETCVELLLEQDVFQKIDG), 788-817 (AFSPLHCAVINDNEGAAEMLIDSLGASIVN), 822-851 (KGRTPLHAAAFTDHVECLQLLLSQNAQVNS), 855-885 (TGKTPLMMAAENGQTNTVEMLVSSASADLTL), 889-918 (SKNTALHLACGKGHETSALLILEKITDRNL), and 925-954 (ALQTPLHVAARNGLTMVVQELLGKGASVLA). Phosphoserine occurs at positions 1007 and 1011.

Protein phosphatase 6 (PP6) holoenzyme is proposed to be a heterotrimeric complex formed by the catalytic subunit, a SAPS domain-containing subunit (PP6R) and an ankyrin repeat-domain containing regulatory subunit (ARS). Interacts with PPP1C and HNRPK. Interacts with PPP6C, PPP6R1 and PPP6R3. Ubiquitinated by the ECS(RAB40C) complex leading to its degradation and decreased PP6 activity. Widely expressed (at protein level).

The protein localises to the nucleus. The protein resides in the nucleoplasm. It is found in the cytoplasm. Its subcellular location is the cytosol. It localises to the cell projection. The protein localises to the lamellipodium. In terms of biological role, putative regulatory subunit of protein phosphatase 6 (PP6) that may be involved in the recognition of phosphoprotein substrates. Involved in the PP6-mediated dephosphorylation of NFKBIE opposing its degradation in response to TNF-alpha. Selectively inhibits the phosphatase activity of PPP1C. Targets PPP1C to modulate HNRPK phosphorylation. Involved in the PP6-mediated dephosphorylation of MOB1 and induced focal adhesion assembly during cell migration. The sequence is that of Serine/threonine-protein phosphatase 6 regulatory ankyrin repeat subunit A (Ankrd28) from Mus musculus (Mouse).